The following is a 69-amino-acid chain: uncharacterized protein (69 aa).

Residues 22-48 (LFRKSRELSPIKPVRTPTPPAPTPPPM) form a disordered region. A compositionally biased stretch (pro residues) spans 37–48 (TPTPPAPTPPPM).

This is an uncharacterized protein from Lepidoptera (butterflies and moths).